Here is a 197-residue protein sequence, read N- to C-terminus: Imidazoleglycerol-phosphate dehydratase (197 aa).

The protein belongs to the imidazoleglycerol-phosphate dehydratase family.

Its subcellular location is the cytoplasm. The catalysed reaction is D-erythro-1-(imidazol-4-yl)glycerol 3-phosphate = 3-(imidazol-4-yl)-2-oxopropyl phosphate + H2O. The protein operates within amino-acid biosynthesis; L-histidine biosynthesis; L-histidine from 5-phospho-alpha-D-ribose 1-diphosphate: step 6/9. The sequence is that of Imidazoleglycerol-phosphate dehydratase from Stutzerimonas stutzeri (strain A1501) (Pseudomonas stutzeri).